The primary structure comprises 213 residues: Endonuclease III (213 aa).

The HhH domain occupies 108-127 (FKELIKLPGVGRKTANVVLN). Residues Cys-187, Cys-194, Cys-197, and Cys-203 each coordinate [4Fe-4S] cluster.

It belongs to the Nth/MutY family. It depends on [4Fe-4S] cluster as a cofactor.

The enzyme catalyses 2'-deoxyribonucleotide-(2'-deoxyribose 5'-phosphate)-2'-deoxyribonucleotide-DNA = a 3'-end 2'-deoxyribonucleotide-(2,3-dehydro-2,3-deoxyribose 5'-phosphate)-DNA + a 5'-end 5'-phospho-2'-deoxyribonucleoside-DNA + H(+). Functionally, DNA repair enzyme that has both DNA N-glycosylase activity and AP-lyase activity. The DNA N-glycosylase activity releases various damaged pyrimidines from DNA by cleaving the N-glycosidic bond, leaving an AP (apurinic/apyrimidinic) site. The AP-lyase activity cleaves the phosphodiester bond 3' to the AP site by a beta-elimination, leaving a 3'-terminal unsaturated sugar and a product with a terminal 5'-phosphate. The protein is Endonuclease III of Rickettsia felis (strain ATCC VR-1525 / URRWXCal2) (Rickettsia azadi).